The following is a 208-amino-acid chain: Small ribosomal subunit protein uS4 (208 aa).

One can recognise an S4 RNA-binding domain in the interval Arg-98 to Gln-161.

Belongs to the universal ribosomal protein uS4 family. In terms of assembly, part of the 30S ribosomal subunit. Contacts protein S5. The interaction surface between S4 and S5 is involved in control of translational fidelity.

Its function is as follows. One of the primary rRNA binding proteins, it binds directly to 16S rRNA where it nucleates assembly of the body of the 30S subunit. In terms of biological role, with S5 and S12 plays an important role in translational accuracy. This chain is Small ribosomal subunit protein uS4, found in Oleidesulfovibrio alaskensis (strain ATCC BAA-1058 / DSM 17464 / G20) (Desulfovibrio alaskensis).